A 120-amino-acid chain; its full sequence is V-type proton ATPase subunit F (120 aa).

Belongs to the V-ATPase F subunit family. In terms of assembly, V-ATPase is a heteromultimeric enzyme composed of a peripheral catalytic V1 complex (components A to H) attached to an integral membrane V0 proton pore complex (components: a, c, c', c'', d, e, f and VOA1).

The protein resides in the vacuole membrane. Its function is as follows. Subunit of the V1 complex of vacuolar(H+)-ATPase (V-ATPase), a multisubunit enzyme composed of a peripheral complex (V1) that hydrolyzes ATP and a membrane integral complex (V0) that translocates protons. V-ATPase is responsible for acidifying and maintaining the pH of intracellular compartments. The polypeptide is V-type proton ATPase subunit F (Schizosaccharomyces pombe (strain 972 / ATCC 24843) (Fission yeast)).